We begin with the raw amino-acid sequence, 449 residues long: 1H-pyrrole-2-carbonyl-[peptidyl-carrier protein] chlorinase (449 aa).

The FAD site is built by Ala-16, Glu-35, Arg-41, His-43, Val-44, Ser-47, Arg-123, Ile-147, and Asp-316. Residues Ser-327 and Gly-328 each contribute to the chloride site. Val-329 is a binding site for FAD.

This sequence belongs to the flavin-dependent halogenase family. Homodimer.

It carries out the reaction (1H-pyrrole-2-carbonyl)-[peptidyl-carrier protein] + 2 FADH2 + 2 chloride + 2 O2 = (4,5-dichloro-1H-pyrrole-2-carbonyl)-[peptidyl-carrier protein] + 2 FAD + 4 H2O. The enzyme catalyses (1H-pyrrole-2-carbonyl)-[peptidyl-carrier protein] + FADH2 + chloride + O2 = (5-chloro-1H-pyrrole-2-carbonyl)-[peptidyl-carrier protein] + FAD + 2 H2O. The catalysed reaction is (5-chloro-1H-pyrrole-2-carbonyl)-[peptidyl-carrier protein] + FADH2 + chloride + O2 = (4,5-dichloro-1H-pyrrole-2-carbonyl)-[peptidyl-carrier protein] + FAD + 2 H2O. Its pathway is antibiotic biosynthesis. Its function is as follows. Involved in the biosynthesis of the antibiotic pyoluteorin. Catalyzes the dichlorination of the pyrrole ring of pyrrolyl-S-PltL, generating the 5-chloropyrrolyl-S-PltL intermediate and then the 4,5-dichloropyrrolyl-S-PltL product. The polypeptide is 1H-pyrrole-2-carbonyl-[peptidyl-carrier protein] chlorinase (Pseudomonas fluorescens (strain ATCC BAA-477 / NRRL B-23932 / Pf-5)).